The primary structure comprises 817 residues: Dynamin-related protein 5A (817 aa).

Residues 1 to 20 show a composition bias toward polar residues; it reads MANSNTYLTTPTKTPSSRRN. The tract at residues 1 to 37 is disordered; the sequence is MANSNTYLTTPTKTPSSRRNQQSQSKMQSHSKDPINA. In terms of domain architecture, Dynamin-type G spans 59 to 346; sequence KLPIPEIVAI…LQKRYKEAAP (288 aa). The interval 69-76 is G1 motif; that stretch reads GGQSDGKS. Residue 69 to 76 participates in GTP binding; sequence GGQSDGKS. Residues 95-97 form a G2 motif region; it reads GTR. Residues 175–178 form a G3 motif region; the sequence is DTPG. Residues 175 to 179 and 244 to 247 each bind GTP; these read DTPGF and SKFD. The interval 244 to 247 is G4 motif; the sequence is SKFD. Residues 280–283 form a G5 motif region; that stretch reads LPKD. 2 disordered regions span residues 405–425 and 616–658; these read APEQWGKTTEEERGESGIGSW and LSDT…ETPS. Positions 618 to 629 are enriched in basic and acidic residues; that stretch reads DTSRDEPMKDQE.

This sequence belongs to the TRAFAC class dynamin-like GTPase superfamily. Dynamin/Fzo/YdjA family. As to expression, expressed in root and leaf meristems.

Its subcellular location is the cytoplasm. It localises to the cytoskeleton. The protein localises to the phragmoplast. Its function is as follows. Probable microtubule-associated force-producing protein that is targeted to the forming cell plate during cytokinesis. May play a role in cell division. This chain is Dynamin-related protein 5A (DRP5A), found in Arabidopsis thaliana (Mouse-ear cress).